Consider the following 308-residue polypeptide: uncharacterized protein (308 aa).

The next 10 membrane-spanning stretches (helical) occupy residues 6-26 (VVLIVLILVLVGYFSKIFGIL), 31-51 (AKILNNIVIYIAMPSTIFLTI), 63-83 (FLKLPVVIFLCCLFVGILAYL), 100-120 (ILVSMLGNTGFLGYPVALGMF), 128-148 (AIFCDLGGVFATMLLGTYVGI), 162-182 (MAKFPPLITGILSIILVFFGF), 195-215 (LNYLSSATVPLIMMSLGLSLS), 221-241 (FGVFWGIIASIFRFIVSPATA), 257-277 (VLLVESSMPSAMMTLVLGTLY), and 287-307 (SIFITTTFSLLVIALWGWILL).

Belongs to the auxin efflux carrier (TC 2.A.69) family.

The protein resides in the cell membrane. This is an uncharacterized protein from Methanocaldococcus jannaschii (strain ATCC 43067 / DSM 2661 / JAL-1 / JCM 10045 / NBRC 100440) (Methanococcus jannaschii).